The following is a 147-amino-acid chain: Hemoglobin subunit beta (147 aa).

Residues 3–147 (HWTAEEKQII…VAHALARKYH (145 aa)) enclose the Globin domain. 2 residues coordinate heme b: histidine 64 and histidine 93.

In terms of assembly, heterotetramer of two alpha (or alpha-D) and two beta chains. Red blood cells.

Functionally, involved in oxygen transport from the lung to the various peripheral tissues. The beta chain is a component of adult hemoglobin A and D. In Aythya fuligula (Tufted duck), this protein is Hemoglobin subunit beta.